A 377-amino-acid chain; its full sequence is Anhydro-N-acetylmuramic acid kinase (377 aa).

Gly-12–Asp-19 lines the ATP pocket.

It belongs to the anhydro-N-acetylmuramic acid kinase family.

It catalyses the reaction 1,6-anhydro-N-acetyl-beta-muramate + ATP + H2O = N-acetyl-D-muramate 6-phosphate + ADP + H(+). It participates in amino-sugar metabolism; 1,6-anhydro-N-acetylmuramate degradation. The protein operates within cell wall biogenesis; peptidoglycan recycling. In terms of biological role, catalyzes the specific phosphorylation of 1,6-anhydro-N-acetylmuramic acid (anhMurNAc) with the simultaneous cleavage of the 1,6-anhydro ring, generating MurNAc-6-P. Is required for the utilization of anhMurNAc either imported from the medium or derived from its own cell wall murein, and thus plays a role in cell wall recycling. The sequence is that of Anhydro-N-acetylmuramic acid kinase from Methylorubrum populi (strain ATCC BAA-705 / NCIMB 13946 / BJ001) (Methylobacterium populi).